The sequence spans 94 residues: MNLAMLHDNVLVEALEDSNPNSPIQLPDSAKKKPTKGKVVSVGPGASNSDGKVTPMSVKVGDCVYYRQWAGNEIEFDGKKFIVMKESDIIAKEA.

Positions 17-53 are disordered; sequence DSNPNSPIQLPDSAKKKPTKGKVVSVGPGASNSDGKV.

The protein belongs to the GroES chaperonin family. In terms of assembly, heptamer of 7 subunits arranged in a ring. Interacts with the chaperonin GroEL.

Its subcellular location is the cytoplasm. Its function is as follows. Together with the chaperonin GroEL, plays an essential role in assisting protein folding. The GroEL-GroES system forms a nano-cage that allows encapsulation of the non-native substrate proteins and provides a physical environment optimized to promote and accelerate protein folding. GroES binds to the apical surface of the GroEL ring, thereby capping the opening of the GroEL channel. This is Co-chaperonin GroES from Anaplasma phagocytophilum (strain HZ).